A 200-amino-acid polypeptide reads, in one-letter code: Ras-related protein RHN1 (200 aa).

GTP-binding positions include 17–25 (GDMGAGKSS), 36–42 (LEFQEST), 65–69 (DTAGQ), 123–126 (NKAD), and 153–155 (SAK). The short motif at 39–47 (QESTIGAAF) is the Effector region element. 2 S-geranylgeranyl cysteine lipidation sites follow: Cys-198 and Cys-199.

This sequence belongs to the small GTPase superfamily. Rab family. As to expression, high in stem, root, and inflorescence.

The protein localises to the cell membrane. In terms of biological role, protein transport. Probably involved in vesicular traffic. The polypeptide is Ras-related protein RHN1 (RHN1) (Nicotiana plumbaginifolia (Leadwort-leaved tobacco)).